Consider the following 351-residue polypeptide: S-adenosylmethionine:tRNA ribosyltransferase-isomerase (351 aa).

This sequence belongs to the QueA family. As to quaternary structure, monomer.

The protein resides in the cytoplasm. The enzyme catalyses 7-aminomethyl-7-carbaguanosine(34) in tRNA + S-adenosyl-L-methionine = epoxyqueuosine(34) in tRNA + adenine + L-methionine + 2 H(+). Its pathway is tRNA modification; tRNA-queuosine biosynthesis. Transfers and isomerizes the ribose moiety from AdoMet to the 7-aminomethyl group of 7-deazaguanine (preQ1-tRNA) to give epoxyqueuosine (oQ-tRNA). The polypeptide is S-adenosylmethionine:tRNA ribosyltransferase-isomerase (Hyphomonas neptunium (strain ATCC 15444)).